The primary structure comprises 545 residues: uncharacterized protein (545 aa).

The span at Met1 to Arg10 shows a compositional bias: basic residues. The segment at Met1–Pro25 is disordered. 2 WD repeats span residues Ala417–Met456 and Gly460–Ser501.

This is an uncharacterized protein from Caenorhabditis elegans.